The primary structure comprises 396 residues: S-adenosylmethionine synthase (396 aa).

An ATP-binding site is contributed by H14. D16 lines the Mg(2+) pocket. Residue E42 coordinates K(+). L-methionine contacts are provided by E55 and Q98. The flexible loop stretch occupies residues 98-108 (QSPDIALGVNE). Residues 174-176 (DGK), 241-242 (RF), D250, 256-257 (RK), A273, and K277 each bind ATP. D250 is a binding site for L-methionine. K281 provides a ligand contact to L-methionine.

Belongs to the AdoMet synthase family. Homotetramer; dimer of dimers. It depends on Mg(2+) as a cofactor. The cofactor is K(+).

The protein resides in the cytoplasm. It catalyses the reaction L-methionine + ATP + H2O = S-adenosyl-L-methionine + phosphate + diphosphate. It functions in the pathway amino-acid biosynthesis; S-adenosyl-L-methionine biosynthesis; S-adenosyl-L-methionine from L-methionine: step 1/1. Its function is as follows. Catalyzes the formation of S-adenosylmethionine (AdoMet) from methionine and ATP. The overall synthetic reaction is composed of two sequential steps, AdoMet formation and the subsequent tripolyphosphate hydrolysis which occurs prior to release of AdoMet from the enzyme. This chain is S-adenosylmethionine synthase, found in Fervidobacterium nodosum (strain ATCC 35602 / DSM 5306 / Rt17-B1).